The primary structure comprises 226 residues: Glutathione S-transferase kappa 1 (226 aa).

Glutathione is bound by residues 15–17 (SPY), asparagine 53, and 199–200 (SD).

The protein belongs to the GST superfamily. Kappa family.

The catalysed reaction is RX + glutathione = an S-substituted glutathione + a halide anion + H(+). This Caenorhabditis elegans protein is Glutathione S-transferase kappa 1 (gstk-1).